The sequence spans 132 residues: Large-conductance mechanosensitive channel (132 aa).

3 helical membrane passes run Val14–Leu34, Ile38–Thr58, and Phe69–Val89.

The protein belongs to the MscL family. As to quaternary structure, homopentamer.

The protein resides in the cell membrane. Functionally, channel that opens in response to stretch forces in the membrane lipid bilayer. May participate in the regulation of osmotic pressure changes within the cell. The polypeptide is Large-conductance mechanosensitive channel (Bacillus thuringiensis (strain Al Hakam)).